A 386-amino-acid chain; its full sequence is S-(hydroxymethyl)glutathione dehydrogenase (386 aa).

Residue serine 2 is modified to N-acetylserine. Zn(2+) is bound at residue cysteine 49. Histidine 50 is an NAD(+) binding site. Residues histidine 71, glutamate 72, cysteine 101, cysteine 104, cysteine 107, cysteine 115, and cysteine 179 each contribute to the Zn(2+) site. NAD(+) is bound by residues 204 to 209 (GCGTVG), aspartate 228, 300 to 302 (IGV), and 325 to 327 (SAF).

It belongs to the zinc-containing alcohol dehydrogenase family. Class-III subfamily. The cofactor is Zn(2+).

The protein resides in the cytoplasm. It is found in the mitochondrion. It carries out the reaction a primary alcohol + NAD(+) = an aldehyde + NADH + H(+). It catalyses the reaction a secondary alcohol + NAD(+) = a ketone + NADH + H(+). The enzyme catalyses S-(hydroxymethyl)glutathione + NADP(+) = S-formylglutathione + NADPH + H(+). The catalysed reaction is S-(hydroxymethyl)glutathione + NAD(+) = S-formylglutathione + NADH + H(+). It carries out the reaction S-nitrosoglutathione + NADH + H(+) = S-(hydroxysulfenamide)glutathione + NAD(+). Functionally, oxidizes long-chain alcohols and, in the presence of glutathione, is able to oxidize formaldehyde. Is responsible for yeast resistance to formaldehyde. Also acts as a S-nitroso-glutathione reductase by catalyzing the NADH-dependent reduction of S-nitrosoglutathione, thereby regulating protein S-nitrosylation. This Saccharomyces cerevisiae (strain ATCC 204508 / S288c) (Baker's yeast) protein is S-(hydroxymethyl)glutathione dehydrogenase (SFA1).